The primary structure comprises 131 residues: MSWQAYVDEHLMCEIEGHHLASAAILGHDGTVWAQSADFPQFKPEEITGIMKDFDEPGHLAPTGMFVATAKYMVIQGEPGAVIRGKKGAGGITIKKTGQALVVGIYDEPMTPGQCNMVVERLGDYLMKQGM.

Cysteines 13 and 115 form a disulfide. Residues 81-97 (AVIRGKKGAGGITIKKT) carry the Involved in PIP2 interaction motif. Position 111 is a phosphothreonine (threonine 111).

The protein belongs to the profilin family. As to quaternary structure, occurs in many kinds of cells as a complex with monomeric actin in a 1:1 ratio. In terms of processing, phosphorylated by MAP kinases.

The protein localises to the cytoplasm. It is found in the cytoskeleton. Binds to actin and affects the structure of the cytoskeleton. At high concentrations, profilin prevents the polymerization of actin, whereas it enhances it at low concentrations. The polypeptide is Profilin-5 (Olea europaea (Common olive)).